Here is a 153-residue protein sequence, read N- to C-terminus: Transthyretin (153 aa).

Positions 1-24 are cleaved as a signal peptide; sequence MAYYNTLALLTIFIFSGAFHRAQG. C33 is subject to Sulfocysteine. L-thyroxine contacts are provided by K38, E77, and S140.

This sequence belongs to the transthyretin family. Homotetramer. Dimer of dimers. In the homotetramer, subunits assemble around a central channel that can accommodate two ligand molecules. Interacts with RBP4. Sulfonation of the reactive cysteine Cys-33 enhances the stability of the native conformation of TTR, avoiding misassembly of the protein leading to amyloid formation. As to expression, detected in plasma (at protein level). Expressed during metamorphosis in tadpole liver but not in tadpole brain, nor adult liver.

The protein resides in the secreted. Its function is as follows. Thyroid hormone-binding protein, with a much higher binding affinity for triiodothyronine (T3) than for thyroxine (T4). Probably transports triiodothyronine from the bloodstream to the brain. This Aquarana catesbeiana (American bullfrog) protein is Transthyretin.